We begin with the raw amino-acid sequence, 63 residues long: Sperm protamine P1 (63 aa).

The tract at residues Met-1–Tyr-63 is disordered.

It belongs to the protamine P1 family. Testis.

The protein resides in the nucleus. The protein localises to the chromosome. Its function is as follows. Protamines substitute for histones in the chromatin of sperm during the haploid phase of spermatogenesis. They compact sperm DNA into a highly condensed, stable and inactive complex. In Phascogale tapoatafa (Common wambenger), this protein is Sperm protamine P1 (PRM1).